The primary structure comprises 249 residues: Superoxide dismutase 1 copper chaperone (249 aa).

Residues 6-69 (TYEATYAIPM…TLRNCGKDAI (64 aa)) enclose the HMA domain. Zn(2+) is bound at residue His16. Cys17 and Cys20 together coordinate Cu cation. The cysteines at positions 27 and 64 are disulfide-linked. The Cu cation site is built by Cys229 and Cys231.

Belongs to the CCS1 family. As to quaternary structure, homodimer, and heterodimer with apo-SOD1. Zinc-binding at His-16 of CCS1 and 'Glu-43' of apo-SOD1 is required for this heterodimerization. It depends on Cu(2+) as a cofactor.

It is found in the cytoplasm. The protein resides in the mitochondrion intermembrane space. Its function is as follows. Copper chaperone for apo superoxide dismutase 1 (SOD1). Binds copper ions and delivers them specifically to apo-SOD1. The chain is Superoxide dismutase 1 copper chaperone (CCS1) from Saccharomyces cerevisiae (strain ATCC 204508 / S288c) (Baker's yeast).